We begin with the raw amino-acid sequence, 152 residues long: MKSCKPSGPPAGARVAPPCAGGTECAGTCAGAGRLESAARRRLAANARERRRMQGLNTAFDRLRRVVPQWGQDKKLSKYETLQMALSYIMALTRILAEAERFGSERDWVGLHCEHFGRDHYLPFPGAKLPGESELYSQRLFGFQPEPFQMAT.

Positions 40-92 (RRRLAANARERRRMQGLNTAFDRLRRVVPQWGQDKKLSKYETLQMALSYIMAL) constitute a bHLH domain.

Forms a heterodimer with TCF3 isoform E47; interaction may be required for DNA-binding in certain situations.

The protein resides in the nucleus. The protein localises to the perikaryon. Its subcellular location is the cell projection. It is found in the axon. In terms of biological role, transcription factor that binds to DNA at the consensus sequence 5'-CAG[GC]TG-3'. Dimerization with TCF3 isoform E47 may be required in certain situations. Binds to gene promoters and enhancer elements, and thereby regulates a transcriptional program of retinal ganglion cell (RGC) determinant genes. Although the exact mechanism is not certain, retinal transcription regulation by ATOH7 has a role in RGC determination and survival, photoreceptor population development, targeting of RGC axons to the optic nerve and development of the retino-hypothalamic tract. Binds to its own promoter and enhancer sequences, suggesting autoregulation of ATOH7 transcription. Required for retinal circadian rhythm photoentrainment. Plays a role in brainstem auditory signaling and binaural processing. This is Transcription factor ATOH7 from Homo sapiens (Human).